A 256-amino-acid chain; its full sequence is Cysteine-rich repeat secretory protein 29 (256 aa).

An N-terminal signal peptide occupies residues 1 to 26 (MSSVFGSVHILAMIAIQLLLIHSVSS). 2 consecutive Gnk2-homologous domains span residues 33-136 (YLHH…SVAS) and 142-253 (YEND…LYPF).

This sequence belongs to the cysteine-rich repeat secretory protein family.

It is found in the secreted. The protein is Cysteine-rich repeat secretory protein 29 (CRRSP29) of Arabidopsis thaliana (Mouse-ear cress).